A 93-amino-acid polypeptide reads, in one-letter code: Phosphoribosyl-ATP pyrophosphatase (93 aa).

Belongs to the PRA-PH family.

The protein localises to the cytoplasm. The catalysed reaction is 1-(5-phospho-beta-D-ribosyl)-ATP + H2O = 1-(5-phospho-beta-D-ribosyl)-5'-AMP + diphosphate + H(+). It functions in the pathway amino-acid biosynthesis; L-histidine biosynthesis; L-histidine from 5-phospho-alpha-D-ribose 1-diphosphate: step 2/9. The protein is Phosphoribosyl-ATP pyrophosphatase of Rhodococcus jostii (strain RHA1).